A 60-amino-acid polypeptide reads, in one-letter code: UPF0434 protein Rfer_3156 (60 aa).

It belongs to the UPF0434 family.

The sequence is that of UPF0434 protein Rfer_3156 from Albidiferax ferrireducens (strain ATCC BAA-621 / DSM 15236 / T118) (Rhodoferax ferrireducens).